A 177-amino-acid polypeptide reads, in one-letter code: Zinc metalloproteinase-disintegrin-like scutiarin (177 aa).

Positions 1-63 constitute a Disintegrin domain; the sequence is NPCCDAATCK…ECPADVFHKN (63 aa). 10 disulfides stabilise this stretch: cysteine 3-cysteine 26, cysteine 17-cysteine 23, cysteine 22-cysteine 48, cysteine 35-cysteine 55, cysteine 42-cysteine 74, cysteine 67-cysteine 79, cysteine 86-cysteine 136, cysteine 101-cysteine 147, cysteine 114-cysteine 124, and cysteine 131-cysteine 173. The short motif at 41 to 43 is the D/ECD-tripeptide element; the sequence is ECD. Ca(2+) is bound by residues aspartate 43, proline 44, glutamate 46, aspartate 58, and valine 59.

Belongs to the venom metalloproteinase (M12B) family. P-III subfamily. P-IIIa sub-subfamily. Monomer. It depends on Zn(2+) as a cofactor. Post-translationally, glycosylated. As to expression, expressed by the venom gland.

It localises to the secreted. Snake venom metalloproteinase that impairs hemostasis in the envenomed animal. The protein is Zinc metalloproteinase-disintegrin-like scutiarin of Crotalus scutulatus scutulatus (Mojave rattlesnake).